A 396-amino-acid chain; its full sequence is Probable sugar efflux transporter (396 aa).

Transmembrane regions (helical) follow at residues 15–35 (VVTLAIAAFIFNTTEFVPVGL), 50–70 (VGIMLTIYAWVVAVMSLPFML), 81–101 (LICLFVLFIASHVLSFLAWNF), 103–123 (VLVISRIGIAFAHAIFWSITA), 136–156 (AQALSLIATGTALAMVLGLPI), 169–189 (TFFAIGMGALITLLCLIKLLP), 202–222 (LPLLFRCPALMSLYVLTVVVV), 246–266 (FATVLLLLLGGAGIIGSLVFG), 275–295 (SLVSIAIALLVVCLLLLLPAA), 301–321 (LAILSIFWGIAIMVIGLGMQV), 333–353 (VAMALFSGIFNIGIGAGALVG), and 364–384 (AIGYIGAIPACAALVWAVLIF).

The protein belongs to the major facilitator superfamily. SotB (TC 2.A.1.2) family.

Its subcellular location is the cell inner membrane. Its function is as follows. Involved in the efflux of sugars. The physiological role may be the reduction of the intracellular concentration of toxic sugars or sugar metabolites. The sequence is that of Probable sugar efflux transporter from Salmonella paratyphi A (strain ATCC 9150 / SARB42).